Here is a 248-residue protein sequence, read N- to C-terminus: Uridylate kinase (248 aa).

15–18 serves as a coordination point for ATP; the sequence is KLSG. The involved in allosteric activation by GTP stretch occupies residues 23–28; sequence GAEGFG. UMP is bound at residue G57. The ATP site is built by G58 and R62. UMP is bound by residues D77 and 138-145; that span reads TGNPFFTT. Residues T165, Y171, and D174 each contribute to the ATP site.

The protein belongs to the UMP kinase family. As to quaternary structure, homohexamer.

The protein localises to the cytoplasm. The catalysed reaction is UMP + ATP = UDP + ADP. It participates in pyrimidine metabolism; CTP biosynthesis via de novo pathway; UDP from UMP (UMPK route): step 1/1. Allosterically activated by GTP. Inhibited by UTP. In terms of biological role, catalyzes the reversible phosphorylation of UMP to UDP. The chain is Uridylate kinase from Yersinia enterocolitica serotype O:8 / biotype 1B (strain NCTC 13174 / 8081).